The sequence spans 406 residues: MTYDNLLNRFLTYTRVNTRSDESSETTPTTQSQVDFALTILKPEMKSIGLQNVHYLENGYLVGTLPANGNFPYKIGFIAHMDTADFNAEGVNPQIIDNYNGEIIQLGQTDFVLDPKEFPNLNNYLGQTLITTDGTTLLGSDDKSGIAEIMTAIDYLVKHPEIEHGEIRVGFGPDEEIGRGADQFDVEDFDVDFAYTVDGGPLGELQYETFSAAAAEIDFMGRNVHPGTAKNQMVNALQLAMDFHGQLPQEDRPEKTEGYQGFYHLLSLEGTVDAAHASYIIRDFDDEAFVSRKDFMQKIADKMNAHLGAERVQLQIYDQYYNMRKIIKKDMTCVKLAKKVMENLAIEPIIEPIRGGTDGSKISFMGLPTPNLFAGGENMHGRFEFVSLETMQRAVDVIIGIVCFKQ.

Residue His80 coordinates Zn(2+). Asp82 is a catalytic residue. Residue Asp141 participates in Zn(2+) binding. Glu175 acts as the Proton acceptor in catalysis. Zn(2+) is bound by residues Glu176, Asp198, and His380.

It belongs to the peptidase M20B family. Zn(2+) serves as cofactor.

It is found in the cytoplasm. It catalyses the reaction Release of the N-terminal residue from a tripeptide.. Its function is as follows. Cleaves the N-terminal amino acid of tripeptides. The chain is Peptidase T from Streptococcus mutans serotype c (strain ATCC 700610 / UA159).